Consider the following 258-residue polypeptide: Alpha-fibrinogenase albofibrase (258 aa).

The first 18 residues, 1–18 (MVLIRVLANLLILQLSYA), serve as a signal peptide directing secretion. Positions 19 to 24 (QKSSEL) are excised as a propeptide. The Peptidase S1 domain maps to 25-249 (VVGGDECNIN…YNDWIQSIIA (225 aa)). 6 disulfide bridges follow: C31/C163, C50/C66, C98/C256, C142/C210, C174/C189, and C200/C225. The N-linked (GlcNAc...) asparagine glycan is linked to N44. Catalysis depends on charge relay system residues H65 and D110. The Charge relay system role is filled by S204.

The protein belongs to the peptidase S1 family. Snake venom subfamily. In terms of assembly, monomer. Expressed by the venom gland.

The protein localises to the secreted. In terms of biological role, the recombinant protein has fibrinogenolytic activity against the Aalpha chain (FGA) of fibrinogen. Activates plasminogen (PLG) (is 4-fold less active than urokinase). Has weak thrombin-like enzyme activity. Has enzymatic activity against a trypsin-like substrate (S-3013) and shows a weaker activity on an activated protein C substrate (S-3125). This Trimeresurus albolabris (White-lipped pit viper) protein is Alpha-fibrinogenase albofibrase.